The chain runs to 152 residues: Prostaglandin E synthase (152 aa).

The Lumenal portion of the chain corresponds to 1–12 (MPAHSLAMSSPA). Residues 13-41 (LPAFLLCSTLLVIKMYVVAIITGQVRLRK) traverse the membrane as a helical segment. Residue Arg38 participates in glutathione binding. The Cytoplasmic portion of the chain corresponds to 42 to 60 (KAFANPEDALRHGGPQYCR). The chain crosses the membrane as a helical span at residues 61 to 90 (SDPDVERCLRAHRNDMETIYPFLFLGFVYS). 73-77 (RNDME) is a binding site for glutathione. Topologically, residues 91–95 (FLGPN) are lumenal. A helical transmembrane segment spans residues 96–119 (PFVAWMHFLVFLLGRVVHTVAYLG). His113 and Tyr117 together coordinate glutathione. Residues 120–123 (KLRA) lie on the Cytoplasmic side of the membrane. A helical transmembrane segment spans residues 124–152 (PIRSVTYTLAQLPCASMALQILWEAARHL). 126–130 (RSVTY) contributes to the glutathione binding site.

It belongs to the MAPEG family. As to quaternary structure, homotrimer. The cofactor is glutathione.

It is found in the membrane. The protein resides in the cytoplasm. It localises to the perinuclear region. The catalysed reaction is prostaglandin H2 = prostaglandin E2. It catalyses the reaction 2-glyceryl-prostaglandin H2 = 2-glyceryl-prostaglandin E2. It carries out the reaction prostaglandin G2 = (15S)-15-hydroperoxy-prostaglandin E2. The enzyme catalyses 1-chloro-2,4-dinitrobenzene + glutathione = 2,4-dinitrophenyl-S-glutathione + chloride + H(+). The catalysed reaction is (5S)-hydroperoxy-(6E,8Z,11Z,14Z)-eicosatetraenoate + 2 glutathione = (5S)-hydroxy-(6E,8Z,11Z,14Z)-eicosatetraenoate + glutathione disulfide + H2O. It functions in the pathway lipid metabolism; prostaglandin biosynthesis. In terms of biological role, terminal enzyme of the cyclooxygenase (COX)-2-mediated prostaglandin E2 (PGE2) biosynthetic pathway. Catalyzes the glutathione-dependent oxidoreduction of prostaglandin endoperoxide H2 (PGH2) to prostaglandin E2 (PGE2) in response to inflammatory stimuli. Plays a key role in inflammation response, fever and pain. Also catalyzes the oxidoreduction of endocannabinoids into prostaglandin glycerol esters and PGG2 into 15-hydroperoxy-PGE2. In addition, displays low glutathione transferase and glutathione-dependent peroxidase activities, toward 1-chloro-2,4-dinitrobenzene and 5-hydroperoxyicosatetraenoic acid (5-HPETE), respectively. This Macaca fascicularis (Crab-eating macaque) protein is Prostaglandin E synthase (PTGES).